The chain runs to 128 residues: Deoxycytidylate deaminase (128 aa).

Positions 5 to 128 (DWDEYFLGIA…IERVVYPKES (124 aa)) constitute a CMP/dCMP-type deaminase domain. Zn(2+) is bound at residue His-81. Glu-83 functions as the Proton donor in the catalytic mechanism. Positions 107 and 110 each coordinate Zn(2+).

Belongs to the cytidine and deoxycytidylate deaminase family.

It carries out the reaction dCMP + H2O + H(+) = dUMP + NH4(+). This is Deoxycytidylate deaminase (36.1) from Mycobacterium (Mycobacteriophage D29).